A 490-amino-acid chain; its full sequence is Glycine--tRNA ligase (490 aa).

Substrate-binding residues include R99 and E163. ATP contacts are provided by residues 195–197 (RNE), 205–210 (FRTREF), 282–283 (EL), and 326–329 (GLTR). Residue 210–214 (FEQME) participates in substrate binding. 322–326 (EPAAG) is a substrate binding site. Positions 470 to 490 (PVEMGGEPWPESGVQEAGGLY) are disordered.

Belongs to the class-II aminoacyl-tRNA synthetase family. In terms of assembly, homodimer.

The protein resides in the cytoplasm. The catalysed reaction is tRNA(Gly) + glycine + ATP = glycyl-tRNA(Gly) + AMP + diphosphate. Catalyzes the attachment of glycine to tRNA(Gly). The polypeptide is Glycine--tRNA ligase (Bifidobacterium longum (strain NCC 2705)).